A 217-amino-acid chain; its full sequence is MASKQIFPDFEYPIAYCIAGVDEVGRGPLVGDVVTAAVILDPDNPIEGLMDSKKLSEKKRNLLSLEIKEKAISWSLGRASPQEIDTLNILHATMLAMQRAVEGLNVEPDFVLVDGNRCPTFLCNASESNQQNLKIASQAVVKGDARVTEISAASIIAKVARDNEMIALDKLHPEYGFAKHKGYPTKLHLEKIIEHGVLDCYRQSFKPVARVLGTYHD.

The RNase H type-2 domain maps to 16 to 217 (YCIAGVDEVG…VARVLGTYHD (202 aa)). A divalent metal cation-binding residues include aspartate 22, glutamate 23, and aspartate 114.

It belongs to the RNase HII family. Mn(2+) is required as a cofactor. Mg(2+) serves as cofactor.

The protein localises to the cytoplasm. The catalysed reaction is Endonucleolytic cleavage to 5'-phosphomonoester.. Endonuclease that specifically degrades the RNA of RNA-DNA hybrids. This is Ribonuclease HII from Colwellia psychrerythraea (strain 34H / ATCC BAA-681) (Vibrio psychroerythus).